A 308-amino-acid polypeptide reads, in one-letter code: CASP-like protein 4A2 (308 aa).

Residues 1–135 (MALEAQPSPS…APAPAPRVPA (135 aa)) are disordered. Residues 1 to 161 (MALEAQPSPS…KRPTAVLQRT (161 aa)) lie on the Cytoplasmic side of the membrane. Positions 22-31 (GGAGAPGGSA) are enriched in gly residues. Residues 32–44 (GDADAQARRATSG) show a composition bias toward low complexity. Composition is skewed to pro residues over residues 54–65 (RRSPPPPFPRTP) and 89–132 (FQPP…PAPR). Residues 162 to 182 (ALVARVAAALLCLAALAVLAA) form a helical membrane-spanning segment. Over 183 to 203 (DSRKGFALDSYSNYSQLRYSE) the chain is Extracellular. N-linked (GlcNAc...) asparagine glycosylation is present at Asn195. The chain crosses the membrane as a helical span at residues 204–224 (AVNVIGFVYSVLQFFVLADLM). Residues 225–240 (RRNKHLNPRRKGDYFD) lie on the Cytoplasmic side of the membrane. The chain crosses the membrane as a helical span at residues 241–262 (FFMDQVLAYLLISSSSSATARV). The Extracellular portion of the chain corresponds to 263–280 (GDWIDNWGSDPFPKMANS). Residue Asn279 is glycosylated (N-linked (GlcNAc...) asparagine). Residues 281–301 (SIAISFMAFLVFAISALISAY) traverse the membrane as a helical segment. Residues 302–308 (NLFRRDI) are Cytoplasmic-facing.

The protein belongs to the Casparian strip membrane proteins (CASP) family. Homodimer and heterodimers.

Its subcellular location is the cell membrane. The sequence is that of CASP-like protein 4A2 from Oryza sativa subsp. japonica (Rice).